We begin with the raw amino-acid sequence, 489 residues long: Glutamate--tRNA ligase (489 aa).

Residues 12 to 22 carry the 'HIGH' region motif; the sequence is PSPTGIPHVGM. The short motif at 256–260 is the 'KMSKS' region element; sequence KLSKR. K259 contributes to the ATP binding site.

Belongs to the class-I aminoacyl-tRNA synthetase family. Glutamate--tRNA ligase type 1 subfamily. In terms of assembly, monomer.

It is found in the cytoplasm. It catalyses the reaction tRNA(Glu) + L-glutamate + ATP = L-glutamyl-tRNA(Glu) + AMP + diphosphate. In terms of biological role, catalyzes the attachment of glutamate to tRNA(Glu) in a two-step reaction: glutamate is first activated by ATP to form Glu-AMP and then transferred to the acceptor end of tRNA(Glu). The protein is Glutamate--tRNA ligase of Mycobacterium ulcerans (strain Agy99).